The sequence spans 466 residues: Glutamate--tRNA ligase (466 aa).

A 'HIGH' region motif is present at residues 11–21 (PSPTGFIHLGN). The short motif at 243–247 (KMSKR) is the 'KMSKS' region element. Residue Lys246 coordinates ATP.

Belongs to the class-I aminoacyl-tRNA synthetase family. Glutamate--tRNA ligase type 1 subfamily. Monomer.

It is found in the cytoplasm. The catalysed reaction is tRNA(Glu) + L-glutamate + ATP = L-glutamyl-tRNA(Glu) + AMP + diphosphate. In terms of biological role, catalyzes the attachment of glutamate to tRNA(Glu) in a two-step reaction: glutamate is first activated by ATP to form Glu-AMP and then transferred to the acceptor end of tRNA(Glu). This chain is Glutamate--tRNA ligase, found in Cupriavidus necator (strain ATCC 17699 / DSM 428 / KCTC 22496 / NCIMB 10442 / H16 / Stanier 337) (Ralstonia eutropha).